A 221-amino-acid chain; its full sequence is NEDD4 family-interacting protein 1 (221 aa).

At Ala2 the chain carries N-acetylalanine. The tract at residues 2–41 is interaction with UBE2L3; that stretch reads ALALAALAAVEPACGSGYQQLQNEEEPGEPEQTAGDAPPP. Over 2–116 the chain is Cytoplasmic; that stretch reads ALALAALAAV…TDQLRIGNDG (115 aa). The interval 18-44 is disordered; sequence GYQQLQNEEEPGEPEQTAGDAPPPYSS. 3 consecutive short sequence motifs (PPxY motif) follow at residues 39–42, 64–67, and 74–76; these read PPPY, PPSY, and PSY. Positions 42 to 76 are interaction with ITCH; sequence YSSITAESAAYFDYKDESGFPKPPSYNVATTLPSY. Residues 117 to 137 form a helical membrane-spanning segment; that stretch reads IFMLTFFMAFLFNWIGFFLSF. The Extracellular portion of the chain corresponds to 138-143; that stretch reads CLTTSA. Residues 144–164 traverse the membrane as a helical segment; it reads AGRYGAISGFGLSLIKWILIV. Topologically, residues 165 to 172 are cytoplasmic; that stretch reads RFSTYFPG. A helical transmembrane segment spans residues 173–193; that stretch reads YFDGQYWLWWVFLVLGFLLFL. Over 194 to 221 the chain is Extracellular; it reads RGFINYAKVRKMPETFSNLPRTRVLFIY.

In terms of assembly, forms heterodimers with NDFIP2. Interacts with several E3 ubiquitin-protein ligases, including ITCH, NEDD4, NEDD4L and WWP2. The interaction with NEDD4, NEDD4L and ITCH leads to relocalization of these proteins to exosomes and eventually to exosomal secretion. Interacts with U2SURP. Interacts with SLC11A2/DMT1. Interacts with PTEN. May interact with phosphorylated EGFR. Interacts with BRAT1. Interacts with KCNH2. Interacts with MAVS. Part of a complex containing ITCH, NDFIP1 and MAP3K7. Interacts (via N-terminus) with UBE2L3; the interaction mediates recruitment of UBE2L3 to ITCH. In terms of processing, ubiquitinated by NEDD4; mono-, di- and polyubiquitinated forms are detected. Ubiquitination regulates its degradation. Undergoes transient tyrosine phosphorylation following EGF stimulation, most probably by catalyzed by SRC. Phosphorylation SRC is enhanced in the presence of NDFIP2 which may act as a scaffold to recruit SRC to NDFIP1. As to expression, highly expressed in embryonic and early postnatal cortex (at protein level). Widely expressed. Hardly detectable in resting T-cells; up-regulated in T-cells in response to activation.

It is found in the endosome membrane. It localises to the golgi apparatus membrane. Its subcellular location is the synapse. The protein localises to the synaptosome. The protein resides in the cell projection. It is found in the dendrite. It localises to the secreted. Its function is as follows. Activates HECT domain-containing E3 ubiquitin-protein ligases, including NEDD4 and ITCH, and consequently modulates the stability of their targets. As a result, controls many cellular processes. Prevents chronic T-helper cell-mediated inflammation by activating ITCH and thus controlling JUNB degradation. Promotes pancreatic beta cell death through degradation of JUNB and inhibition of the unfolded protein response, leading to reduction of insulin secretion. Restricts the production of pro-inflammatory cytokines in effector Th17 T-cells by promoting ITCH-mediated ubiquitination and degradation of RORC. Together with NDFIP2, limits the cytokine signaling and expansion of effector Th2 T-cells by promoting degradation of JAK1, probably by ITCH- and NEDD4L-mediated ubiquitination. Regulates peripheral T-cell tolerance to self and foreign antigens, forcing the exit of naive CD4+ T-cells from the cell cycle before they become effector T-cells. Negatively regulates RLR-mediated antiviral response by promoting SMURF1-mediated ubiquitination and subsequent degradation of MAVS. Negatively regulates KCNH2 potassium channel activity by decreasing its cell-surface expression and interfering with channel maturation through recruitment of NEDD4L to the Golgi apparatus where it mediates KCNH2 degradation. In cortical neurons, mediates the ubiquitination of the divalent metal transporter SLC11A2/DMT1 by NEDD4L, leading to its down-regulation and protection of the cells from cobalt and iron toxicity. Important for normal development of dendrites and dendritic spines in cortex. Enhances the ubiquitination of BRAT1 mediated by: NEDD4, NEDD4L and ITCH and is required for the nuclear localization of ubiquitinated BRAT1. Enhances the ITCH-mediated ubiquitination of MAP3K7 by recruiting E2 ubiquitin-conjugating enzyme UBE2L3 to ITCH. Modulates EGFR signaling through multiple pathways. In particular, may regulate the ratio of AKT1-to-MAPK8 signaling in response to EGF, acting on AKT1 probably through PTEN destabilization and on MAPK8 through ITCH-dependent MAP2K4 inactivation. As a result, may control cell growth rate. Inhibits cell proliferation by promoting PTEN nuclear localization and changing its signaling specificity. The polypeptide is NEDD4 family-interacting protein 1 (Ndfip1) (Mus musculus (Mouse)).